The primary structure comprises 54 residues: Conotoxin Cal6.17 (54 aa).

A signal peptide spans 1–19; it reads MSGTGVLLLTLLLLVTMAT. 3 disulfide bridges follow: C24–C39, C32–C49, and C38–C53.

In terms of tissue distribution, expressed by the venom duct.

It localises to the secreted. Probable neurotoxin. The polypeptide is Conotoxin Cal6.17 (Californiconus californicus (California cone)).